The sequence spans 107 residues: UPF0145 protein BT_3410 (107 aa).

Belongs to the UPF0145 family.

The sequence is that of UPF0145 protein BT_3410 from Bacteroides thetaiotaomicron (strain ATCC 29148 / DSM 2079 / JCM 5827 / CCUG 10774 / NCTC 10582 / VPI-5482 / E50).